The sequence spans 413 residues: Tyrosine--tRNA ligase (413 aa).

A 'HIGH' region motif is present at residues 59–68 (PTAPDIHLGH). Positions 243–247 (KMSKS) match the 'KMSKS' region motif. Lys-246 is a binding site for ATP. The region spanning 351-411 (LAIGQLLKQA…GKRRFARVTL (61 aa)) is the S4 RNA-binding domain.

The protein belongs to the class-I aminoacyl-tRNA synthetase family. TyrS type 2 subfamily. As to quaternary structure, homodimer.

Its subcellular location is the cytoplasm. It catalyses the reaction tRNA(Tyr) + L-tyrosine + ATP = L-tyrosyl-tRNA(Tyr) + AMP + diphosphate + H(+). Functionally, catalyzes the attachment of tyrosine to tRNA(Tyr) in a two-step reaction: tyrosine is first activated by ATP to form Tyr-AMP and then transferred to the acceptor end of tRNA(Tyr). The polypeptide is Tyrosine--tRNA ligase (Burkholderia pseudomallei (strain 1710b)).